An 84-amino-acid polypeptide reads, in one-letter code: Large ribosomal subunit protein bL31B (84 aa).

The protein belongs to the bacterial ribosomal protein bL31 family. Type B subfamily. Part of the 50S ribosomal subunit.

This Alkalilimnicola ehrlichii (strain ATCC BAA-1101 / DSM 17681 / MLHE-1) protein is Large ribosomal subunit protein bL31B.